The following is a 468-amino-acid chain: MTKTLPKDFIFGGATAAYQAEGATHTDGKGPVAWDKYLEDNYWYTAEPASDFYNRYPVDLKLAEEYGVNGIRISIAWSRIFPTGYGQVNAKGVEFYHNLFAECHKRHVEPFVTLHHFDTPEALHSNGDFLNRENIEHFVDYAAFCFEEFPEVNYWTTFNEIGPIGDGQYLVGKFPPGIQYDLAKVFQSHHNMMVSHARAVKLYKDKGYKGEIGVVHALPTKYPLDHENPADVRAAELEDIIHNKFILDATYLGRYSAETMEGVNHILSVNGGSLDLREEDFTALEAAKDLNDFLGINYYMSDWMEAFDGETEIIHNGKGKKGSSKYQIKGVGRRVAPDYVPRTDWDWIIYPQGLYDQIMRVKKDYPNYKKIYITENGLGYKDEFVDNTVYDDGRIDYVKQHLEILSDAIADGANVKGYFIWSLMDVFSWSNGYEKRYGLFYVDFETQERYPKKSAHWYKKVAETQIID.

Residues Q19, H116, N159, E160, and N297 each contribute to the D-galactose 6-phosphate site. Residue E160 is the Proton donor of the active site. E375 functions as the Nucleophile in the catalytic mechanism. S428, W429, K435, and Y437 together coordinate D-galactose 6-phosphate.

The protein belongs to the glycosyl hydrolase 1 family.

The catalysed reaction is a 6-phospho-beta-D-galactoside + H2O = D-galactose 6-phosphate + an alcohol. The protein operates within carbohydrate metabolism; lactose degradation; D-galactose 6-phosphate and beta-D-glucose from lactose 6-phosphate: step 1/1. The chain is 6-phospho-beta-galactosidase 2 from Streptococcus pneumoniae (strain ATCC BAA-255 / R6).